We begin with the raw amino-acid sequence, 995 residues long: DNA repair protein Rev1 (995 aa).

The BRCT domain maps to arginine 35 to leucine 121. 2 disordered regions span residues glycine 135 to lysine 164 and valine 182 to arginine 211. Residues lysine 136 to lysine 164 are compositionally biased toward basic and acidic residues. The segment covering alanine 192–arginine 211 has biased composition (low complexity). Positions valine 275–glycine 505 constitute a UmuC domain. Aspartate 279 provides a ligand contact to Mg(2+). DCTP is bound by residues serine 361 to arginine 367, asparagine 373, and aspartate 421. Aspartate 421 contributes to the Mg(2+) binding site. Glutamate 422 is an active-site residue. The interaction with PolI stretch occupies residues serine 696–alanine 868. Positions valine 878–serine 995 are interaction with PolH/DNApol-eta.

It belongs to the DNA polymerase type-Y family. As to quaternary structure, interacts (via C-terminus) with PolH/DNApol-eta (via C-terminal regions). Interacts (via C-terminus) with PolI. Mg(2+) is required as a cofactor.

Its subcellular location is the nucleus. Deoxycytidyl transferase involved in DNA repair. Transfers a dCMP residue from dCTP to the 3'-end of a DNA primer in a template-dependent reaction. May assist in the first step in the bypass of abasic lesions by the insertion of a nucleotide opposite the lesion. Required for normal induction of mutations by physical and chemical agents. During homologous recombination (HR) repair of DNA double-strand breaks (DSBs) regulates the extent of repair synthesis. Possibly recruits the DNA polymerase zeta complex or another translesion polymerase to early DSB repair intermediates to initiate repair synthesis, while also blocking the access of more processive polymerases preventing them from acting during the initial stages of HR repair. This chain is DNA repair protein Rev1, found in Drosophila melanogaster (Fruit fly).